We begin with the raw amino-acid sequence, 204 residues long: CASP-like protein 4B4 (204 aa).

Residues Met1–Ser60 are Cytoplasmic-facing. The chain crosses the membrane as a helical span at residues Gly61–Ala81. At Asn82–Tyr98 the chain is on the extracellular side. Residues Val99–Val119 form a helical membrane-spanning segment. The Cytoplasmic segment spans residues Arg120–Lys130. A helical transmembrane segment spans residues Val131–Val151. The Extracellular segment spans residues Ser152–Ala175. A helical membrane pass occupies residues Ser176–Phe196. The Cytoplasmic segment spans residues Lys197–Ile204.

The protein belongs to the Casparian strip membrane proteins (CASP) family. As to quaternary structure, homodimer and heterodimers.

It is found in the cell membrane. The protein is CASP-like protein 4B4 of Oryza sativa subsp. japonica (Rice).